Consider the following 78-residue polypeptide: Large ribosomal subunit protein uL23 (78 aa).

It belongs to the universal ribosomal protein uL23 family. Part of the 50S ribosomal subunit. Contacts protein L29.

Its function is as follows. Binds to 23S rRNA. One of the proteins that surrounds the polypeptide exit tunnel on the outside of the ribosome. This is Large ribosomal subunit protein uL23 from Nanoarchaeum equitans (strain Kin4-M).